Reading from the N-terminus, the 487-residue chain is 3-octaprenyl-4-hydroxybenzoate carboxy-lyase (487 aa).

Asn-172 contacts Mn(2+). Prenylated FMN contacts are provided by residues 175–177 (IYR), 189–191 (RWL), and 194–195 (RG). Glu-238 is a binding site for Mn(2+). Asp-287 functions as the Proton donor in the catalytic mechanism.

It belongs to the UbiD family. In terms of assembly, homohexamer. Requires prenylated FMN as cofactor. The cofactor is Mn(2+).

The protein localises to the cell membrane. The enzyme catalyses a 4-hydroxy-3-(all-trans-polyprenyl)benzoate + H(+) = a 2-(all-trans-polyprenyl)phenol + CO2. It functions in the pathway cofactor biosynthesis; ubiquinone biosynthesis. Catalyzes the decarboxylation of 3-octaprenyl-4-hydroxy benzoate to 2-octaprenylphenol, an intermediate step in ubiquinone biosynthesis. This chain is 3-octaprenyl-4-hydroxybenzoate carboxy-lyase, found in Nitrosococcus oceani (strain ATCC 19707 / BCRC 17464 / JCM 30415 / NCIMB 11848 / C-107).